The primary structure comprises 574 residues: 4-oxocyclohexanecarboxylate 2-dehydrogenase (574 aa).

It belongs to the FAD-dependent oxidoreductase 2 family. In terms of assembly, monomer. Homodimer. The cofactor is FAD.

It carries out the reaction 4-oxocyclohexane-1-carboxylate + O2 = 4-oxocyclohex-2-ene-1-carboxylate + H2O2. Inhibited by 5,5'-dithio-bis(2- nitrobenzoate) and N-bromosuccinimide, but not by thiol and chelating reagents. Desaturase involved in a cyclohexanecarboxylate (CHCA) degradation pathway. Catalyzes the conversion of 4-oxocyclohexanecarboxylate (4-oxoCHCA) to 4-oxocyclohexenecarboxylate. Is highly specific for 4-oxocyclohexanecarboxylic acid and shows only slight activity with 4-oxo-2-methylcyclohex-2-enecarboxylic acid. This chain is 4-oxocyclohexanecarboxylate 2-dehydrogenase, found in Sinomonas cyclohexanicum (Corynebacterium cyclohexanicum).